We begin with the raw amino-acid sequence, 196 residues long: ATP-dependent Clp protease proteolytic subunit (196 aa).

Catalysis depends on S96, which acts as the Nucleophile. H121 is an active-site residue.

The protein belongs to the peptidase S14 family. As to quaternary structure, fourteen ClpP subunits assemble into 2 heptameric rings which stack back to back to give a disk-like structure with a central cavity, resembling the structure of eukaryotic proteasomes.

Its subcellular location is the cytoplasm. It carries out the reaction Hydrolysis of proteins to small peptides in the presence of ATP and magnesium. alpha-casein is the usual test substrate. In the absence of ATP, only oligopeptides shorter than five residues are hydrolyzed (such as succinyl-Leu-Tyr-|-NHMec, and Leu-Tyr-Leu-|-Tyr-Trp, in which cleavage of the -Tyr-|-Leu- and -Tyr-|-Trp bonds also occurs).. Cleaves peptides in various proteins in a process that requires ATP hydrolysis. Has a chymotrypsin-like activity. Plays a major role in the degradation of misfolded proteins. The polypeptide is ATP-dependent Clp protease proteolytic subunit (Streptococcus thermophilus (strain CNRZ 1066)).